Consider the following 148-residue polypeptide: RxLR effector protein SFI7 (148 aa).

A signal peptide spans 1–22 (MRAYFVLLVAATAILTYGGATA). Asparagine 32 is a glycosylation site (N-linked (GlcNAc...) asparagine). The RxLR-dEER motif lies at 44 to 58 (RSLRVAPSGGNGEER).

Belongs to the RxLR effector family.

The protein localises to the secreted. It localises to the host cytoplasm. The protein resides in the host cell membrane. Effector that suppresses flg22-induced post-translational MAP kinase activation in tomato but not in Arabidopsis. The perception of highly conserved pathogen- or microbe-associated molecular patterns (PAMPs/MAMPs), such as flg22, triggers converging signaling pathways recruiting MAP kinase cascades and inducing transcriptional re-programming, yielding a generic antimicrobial response. Also partially attenuates INF1-triggered cell death. This chain is RxLR effector protein SFI7, found in Phytophthora infestans (strain T30-4) (Potato late blight agent).